Reading from the N-terminus, the 176-residue chain is ATP-dependent protease subunit HslV (176 aa).

Residue Thr5 is part of the active site. The Na(+) site is built by Gly161, Cys164, and Thr167.

The protein belongs to the peptidase T1B family. HslV subfamily. In terms of assembly, a double ring-shaped homohexamer of HslV is capped on each side by a ring-shaped HslU homohexamer. The assembly of the HslU/HslV complex is dependent on binding of ATP.

The protein resides in the cytoplasm. It carries out the reaction ATP-dependent cleavage of peptide bonds with broad specificity.. Allosterically activated by HslU binding. In terms of biological role, protease subunit of a proteasome-like degradation complex believed to be a general protein degrading machinery. This Sulfurovum sp. (strain NBC37-1) protein is ATP-dependent protease subunit HslV.